The sequence spans 477 residues: tRNA(Ile)-lysidine synthase (477 aa).

Position 36–41 (Ser36–Ser41) interacts with ATP.

It belongs to the tRNA(Ile)-lysidine synthase family.

The protein resides in the cytoplasm. It carries out the reaction cytidine(34) in tRNA(Ile2) + L-lysine + ATP = lysidine(34) in tRNA(Ile2) + AMP + diphosphate + H(+). Ligates lysine onto the cytidine present at position 34 of the AUA codon-specific tRNA(Ile) that contains the anticodon CAU, in an ATP-dependent manner. Cytidine is converted to lysidine, thus changing the amino acid specificity of the tRNA from methionine to isoleucine. In Treponema pallidum (strain Nichols), this protein is tRNA(Ile)-lysidine synthase.